The following is a 704-amino-acid chain: Matrix metalloproteinase-9 (704 aa).

A signal peptide spans 1–19; that stretch reads MSPRQPLVLVFLVLGCCSA. Residues 20 to 106 constitute a propeptide, activation peptide; that stretch reads APRPHKPTVV…PRCGVPDLGK (87 aa). Residue N38 is glycosylated (N-linked (GlcNAc...) asparagine). The short motif at 97–104 is the Cysteine switch element; that stretch reads PRCGVPDL. Zn(2+) is bound at residue C99. N-linked (GlcNAc...) asparagine glycosylation occurs at N127. Ca(2+) is bound by residues D131 and D165. 2 residues coordinate Zn(2+): H175 and D177. 4 residues coordinate Ca(2+): D182, G183, N185, and L187. H190 is a Zn(2+) binding site. 3 residues coordinate Ca(2+): G197, Q199, and D201. H203 provides a ligand contact to Zn(2+). Ca(2+) contacts are provided by D205, D206, and E208. Fibronectin type-II domains lie at 225 to 273, 283 to 331, and 342 to 390; these read ADGA…FCPS, GDGK…FCPT, and SAGE…FCPD. Intrachain disulfides connect C230–C256, C244–C271, C288–C314, C302–C329, C347–C373, and C361–C388. H401 is a Zn(2+) binding site. E402 is a catalytic residue. 2 residues coordinate Zn(2+): H405 and H411. Residues 434–507 form a disordered region; it reads DDVRGIQHLY…PSEAPTVPVD (74 aa). Pro residues-rich tracts occupy residues 450–461 and 483–496; these read EPQPPTAPPTAP and TGPP…PPTA. C513 and C701 form a disulfide bridge. 4 Hemopexin repeats span residues 515–560, 561–605, 607–654, and 655–701; these read VNIF…WPAL, PRKL…GLGP, VTQV…YPGV, and PLNT…ILQC.

The protein belongs to the peptidase M10A family. Exists as monomer or homodimer; disulfide-linked. Also exists as heterodimer with LCN2. Macrophages and transformed cell lines produce only the monomeric form. Interacts with ECM1. The cofactor is Zn(2+). It depends on Ca(2+) as a cofactor. N- and O-glycosylated.

The protein resides in the secreted. Its subcellular location is the extracellular space. The protein localises to the extracellular matrix. The enzyme catalyses Cleavage of gelatin types I and V and collagen types IV and V.. Matrix metalloproteinase that plays an essential role in local proteolysis of the extracellular matrix and in leukocyte migration. Could play a role in bone osteoclastic resorption. Cleaves KiSS1 at a Gly-|-Leu bond. Cleaves NINJ1 to generate the Secreted ninjurin-1 form. Cleaves type IV and type V collagen into large C-terminal three quarter fragments and shorter N-terminal one quarter fragments. Degrades fibronectin but not laminin or Pz-peptide. In Canis lupus familiaris (Dog), this protein is Matrix metalloproteinase-9 (MMP9).